Reading from the N-terminus, the 223-residue chain is ATP-dependent dethiobiotin synthetase BioD (223 aa).

Threonine 16 serves as a coordination point for Mg(2+). Lysine 37 is a catalytic residue. Substrate is bound at residue serine 41. Positions 50 and 111 each coordinate Mg(2+). ATP is bound by residues aspartate 50, 111 to 114, and 171 to 172; these read EGAG and NR.

It belongs to the dethiobiotin synthetase family. Homodimer. Mg(2+) is required as a cofactor.

It localises to the cytoplasm. It catalyses the reaction (7R,8S)-7,8-diammoniononanoate + CO2 + ATP = (4R,5S)-dethiobiotin + ADP + phosphate + 3 H(+). Its pathway is cofactor biosynthesis; biotin biosynthesis; biotin from 7,8-diaminononanoate: step 1/2. Its function is as follows. Catalyzes a mechanistically unusual reaction, the ATP-dependent insertion of CO2 between the N7 and N8 nitrogen atoms of 7,8-diaminopelargonic acid (DAPA, also called 7,8-diammoniononanoate) to form a ureido ring. This Anaeromyxobacter dehalogenans (strain 2CP-1 / ATCC BAA-258) protein is ATP-dependent dethiobiotin synthetase BioD.